Here is a 3527-residue protein sequence, read N- to C-terminus: BEACH domain-containing protein A2 (3527 aa).

3 disordered regions span residues 25 to 46 (AGEA…PSSS), 385 to 423 (SSPH…LNSR), and 454 to 490 (ESSG…CEQG). The segment covering 28–46 (AISDPTTPPSSSQASPSSS) has biased composition (low complexity). The segment covering 455–469 (SSGTSTSLLSQTKLT) has biased composition (low complexity). Over residues 472 to 481 (SRRQTPSANN) the composition is skewed to polar residues. LRR repeat units lie at residues 1447-1470 (KLES…NYED), 1499-1522 (FSHL…VLSN), 1542-1565 (SIQI…SHNL), 1566-1588 (AILR…DVEV), and 2001-2024 (SSEM…SRSS). 2 disordered regions span residues 1992–2023 (GDHV…DSRS) and 2046–2081 (IPSP…SQGS). The span at 1998-2020 (VSASSEMKSLDLTGSSSQVQPID) shows a compositional bias: polar residues. 3 LRR repeats span residues 2128-2151 (TEQI…VDPE), 2221-2247 (LLSI…LLSI), and 2313-2336 (VSAV…LDTD). The disordered stretch occupies residues 2658–2680 (VNTDEKSETGSPIKSSSGKMDEI). A compositionally biased stretch (polar residues) spans 2666–2675 (TGSPIKSSSG). The 168-residue stretch at 2704 to 2871 (EHLEKIRFRY…EREEVFRNLL (168 aa)) folds into the BEACH-type PH domain. The 293-residue stretch at 2896-3188 (GSRLFKLMAK…QLFQKPHVKR (293 aa)) folds into the BEACH domain. WD repeat units lie at residues 3272-3311 (HEGN…PRGS), 3322-3361 (AHTA…FVRQ), 3410-3451 (DLIV…DPVS), and 3483-3522 (FHKQ…LKAS).

This Arabidopsis thaliana (Mouse-ear cress) protein is BEACH domain-containing protein A2.